A 1805-amino-acid chain; its full sequence is Obscurin-like protein 1 (1805 aa).

At Ser-10 the chain carries Phosphoserine. Residues Pro-12–Thr-100 form the Ig-like 1 domain. The interval Phe-17–Arg-19 is interaction with TTN. The cysteines at positions 33 and 84 are disulfide-linked. Residues Arg-85–Tyr-94 form an interaction with TTN region. Over residues Pro-104 to Gly-122 the composition is skewed to pro residues. Positions Pro-104–Leu-131 are disordered. Ig-like domains lie at Pro-128–Gln-225, Pro-240–Ser-330, and Pro-339–Thr-425. Cystine bridges form between Cys-149-Cys-209, Cys-267-Cys-319, and Cys-362-Cys-412. The Fibronectin type-III domain maps to Pro-517–Thr-615. Ig-like domains follow at residues Pro-720 to Thr-800, Pro-804 to Thr-891, Pro-902 to Thr-982, Pro-986 to Thr-1075, Pro-1078 to Ser-1165, Pro-1176 to Gln-1261, Pro-1266 to His-1351, Thr-1355 to Ser-1442, Pro-1536 to Ser-1628, and Pro-1702 to Gln-1798. 6 disulfide bridges follow: Cys-738–Cys-788, Cys-829–Cys-879, Cys-920–Cys-970, Cys-1011–Cys-1061, Cys-1103–Cys-1153, and Cys-1195–Cys-1245. The cysteines at positions 1558 and 1608 are disulfide-linked.

As to quaternary structure, component of the 3M complex, composed of core components CUL7, CCDC8 and OBSL1. Interacts with CCDC8. Interacts with CUL7; the interaction is direct. Interacts with FBXW8. Interacts (via N-terminal Ig-like domain) with TTN/titin (via C-terminal Ig-like domain); the interaction is direct. In terms of tissue distribution, expressed in granule neurons, with levels decreasing with neuronal maturation.

It localises to the cytoplasm. The protein localises to the perinuclear region. Its subcellular location is the golgi apparatus. Its function is as follows. Core component of the 3M complex, a complex required to regulate microtubule dynamics and genome integrity. It is unclear how the 3M complex regulates microtubules, it could act by controlling the level of a microtubule stabilizer. Acts as a regulator of the Cul7-RING(FBXW8) ubiquitin-protein ligase, playing a critical role in the ubiquitin ligase pathway that regulates Golgi morphogenesis and dendrite patterning in brain. Required to localize CUL7 to the Golgi apparatus in neurons. The chain is Obscurin-like protein 1 (Obsl1) from Rattus norvegicus (Rat).